Reading from the N-terminus, the 217-residue chain is Aprataxin-like protein (217 aa).

The HIT domain occupies Ala6–His139. 3 interaction with DNA regions span residues Asp34–Lys38, His121–His132, and Lys144–His148. Residue His130 is the Nucleophile of the active site. Zn(2+) is bound by residues Cys188, Cys191, His205, and Glu209.

The protein localises to the nucleus. It localises to the cytoplasm. The catalysed reaction is a 5'-end adenosine-5'-diphospho-5'-2'-deoxyribonucleoside-DNA + H2O = a 5'-end 5'-phospho-2'-deoxyribonucleoside-DNA + AMP + 2 H(+). The enzyme catalyses a 5'-end adenosine-5'-diphospho-5'-ribonucleoside-2'-deoxyribonucleotide-DNA + H2O = a 5'-end 5'-phospho-ribonucleoside-2'-deoxyribonucleotide-DNA + AMP + 2 H(+). It catalyses the reaction a 3'-end 2'-deoxyribonucleotide-3'-diphospho-5'-guanosine-DNA + H2O = a 3'-end 2'-deoxyribonucleotide 3'-phosphate-DNA + GMP + 2 H(+). Functionally, DNA-binding protein involved in single-strand DNA break repair, double-strand DNA break repair and base excision repair. Resolves abortive DNA ligation intermediates formed either at base excision sites, or when DNA ligases attempt to repair non-ligatable breaks induced by reactive oxygen species. Catalyzes the release of adenylate groups covalently linked to 5'-phosphate termini, resulting in the production of 5'-phosphate termini that can be efficiently rejoined. Likewise, catalyzes the release of 3'-linked guanosine (DNAppG) and inosine (DNAppI) from DNA, but has higher specific activity with 5'-linked adenosine (AppDNA). The chain is Aprataxin-like protein (HNT3) from Saccharomyces cerevisiae (strain ATCC 204508 / S288c) (Baker's yeast).